A 383-amino-acid polypeptide reads, in one-letter code: Na(+)/H(+) antiporter NhaA (383 aa).

11 helical membrane-spanning segments follow: residues 10 to 30 (LIGG…NNSP), 56 to 76 (LMHW…GLEI), 91 to 111 (IITP…IYLS), 121 to 141 (GWAI…ALLG), 150 to 170 (LLVI…IAIF), 174 to 194 (SLSL…IICN), 206 to 226 (VVLG…ATLA), 254 to 274 (PWII…ISFS), 289 to 308 (IIWG…LAVF), 327 to 347 (GISL…VLAF), and 355 to 375 (AIKI…YIVL).

Belongs to the NhaA Na(+)/H(+) (TC 2.A.33) antiporter family.

It localises to the cell inner membrane. It catalyses the reaction Na(+)(in) + 2 H(+)(out) = Na(+)(out) + 2 H(+)(in). Functionally, na(+)/H(+) antiporter that extrudes sodium in exchange for external protons. The protein is Na(+)/H(+) antiporter NhaA of Francisella tularensis subsp. holarctica (strain FTNF002-00 / FTA).